The chain runs to 167 residues: U-scoloptoxin(08)-Er5a (167 aa).

The signal sequence occupies residues 1–22 (MKTNCEFPLLCLLIVLVANVEG). A propeptide spanning residues 23–94 (EVEDTGLKMV…KRLWRNWERR (72 aa)) is cleaved from the precursor. 3 RLWRNWE repeats span residues 34-40 (RLWRNWE), 61-67 (RLWRNWE), and 86-92 (RLWRNWE). Residue Gln-95 is modified to Pyrrolidone carboxylic acid. One copy of the RLWRNWE 4; approximate repeat lies at 107-113 (ELWRNWE). A propeptide spanning residues 112–118 (WEDLKRR) is cleaved from the precursor. Position 119 is a pyrrolidone carboxylic acid (Gln-119). The stretch at 134-140 (RLWRNWE) is one RLWRNWE 5 repeat. A propeptide spanning residues 139 to 167 (WEDNHATLRKRSADSLSRQKRLGKERGKE) is cleaved from the precursor. Positions 147–167 (RKRSADSLSRQKRLGKERGKE) are disordered.

It belongs to the scoloptoxin-08 family. Expressed by the venom gland.

Its subcellular location is the secreted. The chain is U-scoloptoxin(08)-Er5a from Ethmostigmus rubripes (Giant centipede).